A 339-amino-acid chain; its full sequence is RNA 3'-terminal phosphate cyclase (339 aa).

ATP is bound by residues Gln103 and His283–Gln287. Residue His308 is the Tele-AMP-histidine intermediate of the active site.

It belongs to the RNA 3'-terminal cyclase family. Type 1 subfamily.

It is found in the cytoplasm. It carries out the reaction a 3'-end 3'-phospho-ribonucleotide-RNA + ATP = a 3'-end 2',3'-cyclophospho-ribonucleotide-RNA + AMP + diphosphate. Catalyzes the conversion of 3'-phosphate to a 2',3'-cyclic phosphodiester at the end of RNA. The mechanism of action of the enzyme occurs in 3 steps: (A) adenylation of the enzyme by ATP; (B) transfer of adenylate to an RNA-N3'P to produce RNA-N3'PP5'A; (C) and attack of the adjacent 2'-hydroxyl on the 3'-phosphorus in the diester linkage to produce the cyclic end product. The biological role of this enzyme is unknown but it is likely to function in some aspects of cellular RNA processing. This Salmonella typhimurium (strain LT2 / SGSC1412 / ATCC 700720) protein is RNA 3'-terminal phosphate cyclase.